A 193-amino-acid polypeptide reads, in one-letter code: Orotate phosphoribosyltransferase (193 aa).

Residues R85, K89, H91, and 111–119 (DDVLTTGKS) each bind 5-phospho-alpha-D-ribose 1-diphosphate. Positions 115 and 143 each coordinate orotate.

It belongs to the purine/pyrimidine phosphoribosyltransferase family. PyrE subfamily. In terms of assembly, homodimer. The cofactor is Mg(2+).

The enzyme catalyses orotidine 5'-phosphate + diphosphate = orotate + 5-phospho-alpha-D-ribose 1-diphosphate. It participates in pyrimidine metabolism; UMP biosynthesis via de novo pathway; UMP from orotate: step 1/2. Catalyzes the transfer of a ribosyl phosphate group from 5-phosphoribose 1-diphosphate to orotate, leading to the formation of orotidine monophosphate (OMP). This chain is Orotate phosphoribosyltransferase, found in Pyrobaculum islandicum (strain DSM 4184 / JCM 9189 / GEO3).